Here is a 231-residue protein sequence, read N- to C-terminus: Putative N-acetylmannosamine-6-phosphate 2-epimerase (231 aa).

This sequence belongs to the NanE family.

It carries out the reaction an N-acyl-D-glucosamine 6-phosphate = an N-acyl-D-mannosamine 6-phosphate. It participates in amino-sugar metabolism; N-acetylneuraminate degradation; D-fructose 6-phosphate from N-acetylneuraminate: step 3/5. Functionally, converts N-acetylmannosamine-6-phosphate (ManNAc-6-P) to N-acetylglucosamine-6-phosphate (GlcNAc-6-P). This Listeria monocytogenes serotype 4b (strain F2365) protein is Putative N-acetylmannosamine-6-phosphate 2-epimerase.